Reading from the N-terminus, the 508-residue chain is Photosystem II CP47 reaction center protein (508 aa).

A run of 6 helical transmembrane segments spans residues 21–36 (SVHIMHTALVAGWAGS), 101–115 (IVFSGLCFLAAIWHW), 140–156 (GIHLFLSGVACFGFGAF), 203–218 (IAAGTLGILAGLFHLS), 237–252 (VLSSSIAAVFFAAFVV), and 457–472 (SFALLFFFGHIWHGAR).

The protein belongs to the PsbB/PsbC family. PsbB subfamily. As to quaternary structure, PSII is composed of 1 copy each of membrane proteins PsbA, PsbB, PsbC, PsbD, PsbE, PsbF, PsbH, PsbI, PsbJ, PsbK, PsbL, PsbM, PsbT, PsbX, PsbY, PsbZ, Psb30/Ycf12, at least 3 peripheral proteins of the oxygen-evolving complex and a large number of cofactors. It forms dimeric complexes. It depends on Binds multiple chlorophylls. PSII binds additional chlorophylls, carotenoids and specific lipids. as a cofactor.

The protein localises to the plastid. It localises to the chloroplast thylakoid membrane. One of the components of the core complex of photosystem II (PSII). It binds chlorophyll and helps catalyze the primary light-induced photochemical processes of PSII. PSII is a light-driven water:plastoquinone oxidoreductase, using light energy to abstract electrons from H(2)O, generating O(2) and a proton gradient subsequently used for ATP formation. The sequence is that of Photosystem II CP47 reaction center protein from Gossypium barbadense (Sea Island cotton).